Reading from the N-terminus, the 116-residue chain is MINKKSSNETRQKRHLRIRKHVIGTPDRPRLNVFRSNTAIYVQIINDETHNTLTSANTKELKVGANIEGAAALGKAVAEQALKLGITKVVFDRGGYLYHGRIKALADAARAAGLEF.

It belongs to the universal ribosomal protein uL18 family. In terms of assembly, part of the 50S ribosomal subunit; part of the 5S rRNA/L5/L18/L25 subcomplex. Contacts the 5S and 23S rRNAs.

This is one of the proteins that bind and probably mediate the attachment of the 5S RNA into the large ribosomal subunit, where it forms part of the central protuberance. The chain is Large ribosomal subunit protein uL18 from Acholeplasma laidlawii (strain PG-8A).